A 137-amino-acid polypeptide reads, in one-letter code: Chaperone protein YscB (137 aa).

Interacts with SycN to form a complex which specifically binds to YopN.

It is found in the cytoplasm. The protein localises to the cell inner membrane. Functions as a specific chaperone for YopN. It could facilitate the secretion and the subsequent translocation of YopN. In Yersinia enterocolitica, this protein is Chaperone protein YscB (yscB).